A 258-amino-acid polypeptide reads, in one-letter code: Tryptophan synthase alpha chain (258 aa).

Residues Glu-47 and Asp-58 each act as proton acceptor in the active site.

It belongs to the TrpA family. Tetramer of two alpha and two beta chains.

It carries out the reaction (1S,2R)-1-C-(indol-3-yl)glycerol 3-phosphate + L-serine = D-glyceraldehyde 3-phosphate + L-tryptophan + H2O. Its pathway is amino-acid biosynthesis; L-tryptophan biosynthesis; L-tryptophan from chorismate: step 5/5. Its function is as follows. The alpha subunit is responsible for the aldol cleavage of indoleglycerol phosphate to indole and glyceraldehyde 3-phosphate. The sequence is that of Tryptophan synthase alpha chain from Bacillus cereus (strain AH820).